A 709-amino-acid polypeptide reads, in one-letter code: Leucine-rich repeat-containing protein 4B (709 aa).

Residues 1–38 form the signal peptide; sequence MAQAHIRGSPCPLLPPGRMSWPHGALLLLWLFSPPLRA. The LRRNT domain occupies 50-88; sequence GGGSPPATSCPAACSCSNQASRVICTRRELAEVPASIPV. LRR repeat units lie at residues 89–110, 113–134, 137–158, 161–182, 185–207, 210–231, 232–253, 256–277, and 280–301; these read NTRY…TFKH, HLEI…AFNG, SLNT…AFEY, KLRE…AFNR, SLRR…AFEG, NLRY…TALV, RLEE…SFQG, SLRK…AFDD, and SLEE…LFTP. A glycan (N-linked (GlcNAc...) asparagine) is linked at Asn-226. Residues Asn-285, Asn-335, Asn-376, Asn-402, Asn-424, Asn-427, Asn-446, and Asn-454 are each glycosylated (N-linked (GlcNAc...) asparagine). Residues 313-365 form the LRRCT domain; that stretch reads NPWHCNCDVLWLSWWLKETVPSNTTCCARCHAPAGLKGRYIGELDQSHFTCYA. Residues 366–454 form the Ig-like C2-type domain; sequence PVIVEPPTDL…GNTTASATLN (89 aa). A disulfide bridge connects residues Cys-387 and Cys-438. Residues 496–552 form a disordered region; that stretch reads TQPGEEAQQPRGTEKEPPGPTTDGAWGGGRPDAAAPASASTTAPAPRSSRPTEKAFT. Residues 528-544 are compositionally biased toward low complexity; the sequence is AAAPASASTTAPAPRSS. Residues 575–595 traverse the membrane as a helical segment; the sequence is IIIGCFVAITFMAAVMLVAFY. Ser-689 is modified (phosphoserine).

Interacts with PTPRF. Interacts with DLG4. Post-translationally, N-glycosylated. O-glycosylated; contains sialic acid.

The protein resides in the membrane. It is found in the presynaptic cell membrane. Its function is as follows. Synaptic adhesion protein. Regulates the formation of excitatory synapses. The trans-synaptic adhesion between LRRC4B and PTPRF regulates the formation of excitatory synapses in a bidirectional manner. This Mus musculus (Mouse) protein is Leucine-rich repeat-containing protein 4B (Lrrc4b).